The sequence spans 271 residues: Mannosyl-3-phosphoglycerate phosphatase (271 aa).

The active-site Nucleophile is the Asp-13. Residues Asp-13, Asp-15, and Asp-214 each contribute to the Mg(2+) site.

This sequence belongs to the HAD-like hydrolase superfamily. MPGP family. Mg(2+) is required as a cofactor.

It localises to the cytoplasm. It catalyses the reaction 2-O-(alpha-D-mannosyl)-3-phosphoglycerate + H2O = (2R)-2-O-(alpha-D-mannosyl)-glycerate + phosphate. This Escherichia coli (strain SMS-3-5 / SECEC) protein is Mannosyl-3-phosphoglycerate phosphatase.